The sequence spans 370 residues: Chorismate synthase (370 aa).

Arginine 48 and arginine 54 together coordinate NADP(+). FMN-binding positions include 130 to 132, 242 to 243, glycine 287, 302 to 306, and arginine 328; these read RSS, NA, and KPTSS.

It belongs to the chorismate synthase family. Homotetramer. Requires FMNH2 as cofactor.

The enzyme catalyses 5-O-(1-carboxyvinyl)-3-phosphoshikimate = chorismate + phosphate. Its pathway is metabolic intermediate biosynthesis; chorismate biosynthesis; chorismate from D-erythrose 4-phosphate and phosphoenolpyruvate: step 7/7. Catalyzes the anti-1,4-elimination of the C-3 phosphate and the C-6 proR hydrogen from 5-enolpyruvylshikimate-3-phosphate (EPSP) to yield chorismate, which is the branch point compound that serves as the starting substrate for the three terminal pathways of aromatic amino acid biosynthesis. This reaction introduces a second double bond into the aromatic ring system. This Xanthobacter autotrophicus (strain ATCC BAA-1158 / Py2) protein is Chorismate synthase.